The following is a 162-amino-acid chain: Caveolin-2 (162 aa).

At 1–86 the chain is on the cytoplasmic side; the sequence is MGLETEKADV…FEISKYVIYK (86 aa). At Y19 the chain carries Phosphotyrosine; by SRC. Phosphoserine is present on residues S20 and S23. A Phosphotyrosine; by SRC modification is found at Y27. Phosphoserine is present on S36. The helical intramembrane region spans 87–107; that stretch reads FLTFFLAIPMAFAAGILFAIL. Over 108-162 the chain is Cytoplasmic; it reads SCLHIWIIMPFVKTCLMVLPSVQTIWKTITDVVIAPLCTSVGRSFSSISLQLSHD.

It belongs to the caveolin family. As to quaternary structure, monomer or homodimer. Interacts with CAV1; the interaction forms a stable heterooligomeric complex that is required for targeting to lipid rafts and for caveolae formation. Tyrosine phosphorylated forms do not form heterooligomers with the Tyr-19-phosphorylated form existing as a monomer or dimer, and the Tyr-27-form as a monomer only. Interacts (tyrosine phosphorylated form) with the SH2 domain-containing proteins, RASA1, NCK1 and SRC. Interacts (tyrosine phosphorylated form) with INSR, the interaction (Tyr-27-phosphorylated form) is increased on insulin stimulation. Interacts (Tyr-19 phosphorylated form) with MAPK1 (phosphorylated form); the interaction, promoted by insulin, leads to nuclear location and MAPK1 activation. Interacts with STAT3; the interaction is increased on insulin-induced tyrosine phosphorylation leading to STAT activation. In terms of processing, phosphorylated on serine and tyrosine residues. CAV1 promotes phosphorylation on Ser-23 which then targets the complex to the plasma membrane, lipid rafts and caveolae. Phosphorylation on Ser-36 appears to modulate mitosis in endothelial cells. Phosphorylation on both Tyr-19 and Tyr-27 is required for insulin-induced 'Ser-727' phosphorylation of STAT3 and its activation. Phosphorylation on Tyr-19 is required for insulin-induced phosphorylation of MAPK1 and DNA binding of STAT3. Tyrosine phosphorylation is induced by both EGF and insulin (By. similarity).

The protein localises to the nucleus. Its subcellular location is the cytoplasm. It is found in the golgi apparatus membrane. It localises to the cell membrane. The protein resides in the membrane. The protein localises to the caveola. Its function is as follows. May act as a scaffolding protein within caveolar membranes. Interacts directly with G-protein alpha subunits and can functionally regulate their activity. Acts as an accessory protein in conjunction with CAV1 in targeting to lipid rafts and driving caveolae formation. The Ser-36 phosphorylated form has a role in modulating mitosis in endothelial cells. Positive regulator of cellular mitogenesis of the MAPK signaling pathway. Required for the insulin-stimulated nuclear translocation and activation of MAPK1 and STAT3, and the subsequent regulation of cell cycle progression. The chain is Caveolin-2 (CAV2) from Mustela putorius furo (European domestic ferret).